The primary structure comprises 307 residues: Ribosomal RNA small subunit methyltransferase H (307 aa).

S-adenosyl-L-methionine is bound by residues 33 to 35 (GGY), Asp-51, Phe-82, Asp-96, and Gln-103.

This sequence belongs to the methyltransferase superfamily. RsmH family.

It localises to the cytoplasm. It carries out the reaction cytidine(1402) in 16S rRNA + S-adenosyl-L-methionine = N(4)-methylcytidine(1402) in 16S rRNA + S-adenosyl-L-homocysteine + H(+). Functionally, specifically methylates the N4 position of cytidine in position 1402 (C1402) of 16S rRNA. The chain is Ribosomal RNA small subunit methyltransferase H from Rickettsia peacockii (strain Rustic).